A 426-amino-acid chain; its full sequence is Oligouridylate-binding protein 1A (426 aa).

The tract at residues M1–A26 is disordered. The span at Q9–A26 shows a compositional bias: low complexity. 2 RRM domains span residues R63–A137 and F148–K226. A disordered region spans residues F230–F268. S250 is subject to Phosphoserine. Residues T269–K344 form the RRM 3 domain.

In terms of assembly, interacts with UBA1A and UBA2A.

The protein localises to the nucleus. Heterogeneous nuclear ribonucleoprotein (hnRNP)-like protein that acts as a component of the pre-mRNA processing machinery. Functions to facilitate the nuclear maturation of plant pre-mRNAs. This Arabidopsis thaliana (Mouse-ear cress) protein is Oligouridylate-binding protein 1A (UBP1A).